The sequence spans 475 residues: F-box protein At3g59150 (475 aa).

An F-box domain is found at 12 to 58 (GDVISNLPNDLLCRILSYLSTKEAALTSILSKRWSNLLLSIPILDFD).

This is F-box protein At3g59150 from Arabidopsis thaliana (Mouse-ear cress).